Reading from the N-terminus, the 228-residue chain is Cytidylate kinase (228 aa).

Position 17–25 (17–25) interacts with ATP; it reads GPTASGKGT.

The protein belongs to the cytidylate kinase family. Type 1 subfamily.

The protein resides in the cytoplasm. It catalyses the reaction CMP + ATP = CDP + ADP. The catalysed reaction is dCMP + ATP = dCDP + ADP. The chain is Cytidylate kinase from Burkholderia thailandensis (strain ATCC 700388 / DSM 13276 / CCUG 48851 / CIP 106301 / E264).